We begin with the raw amino-acid sequence, 590 residues long: Laccase-19 (590 aa).

The first 28 residues, 1 to 28, serve as a signal peptide directing secretion; it reads MEKLSMVTSLLCAITVAVLAVAVVSGEA. 2 Plastocyanin-like domains span residues 36–152 and 161–315; these read VVHE…PRDG and KDVP…YAGT. N-linked (GlcNAc...) asparagine glycosylation is found at N41 and N47. Cu cation contacts are provided by H86 and H88. Residue N120 is glycosylated (N-linked (GlcNAc...) asparagine). Positions 131 and 133 each coordinate Cu cation. N-linked (GlcNAc...) asparagine glycosylation is found at N205, N344, N378, N397, N434, and N465. The 143-residue stretch at 424 to 566 folds into the Plastocyanin-like 3 domain; that stretch reads DFPIRPPRPF…ATAFIVEDGP (143 aa). The Cu cation site is built by N483, H486, H488, H545, C546, H547, H551, and M556. Residues 565 to 590 are disordered; the sequence is GPTPETSLPPPPPEFKRCGNNGLSQP.

Belongs to the multicopper oxidase family. The cofactor is Cu cation.

The protein resides in the secreted. It is found in the extracellular space. It localises to the apoplast. It carries out the reaction 4 hydroquinone + O2 = 4 benzosemiquinone + 2 H2O. Lignin degradation and detoxification of lignin-derived products. This Oryza sativa subsp. japonica (Rice) protein is Laccase-19 (LAC19).